Consider the following 290-residue polypeptide: Ribosomal RNA small subunit methyltransferase A (290 aa).

Asn-27, Leu-29, Gly-54, Glu-75, Asp-100, and Asn-125 together coordinate S-adenosyl-L-methionine.

It belongs to the class I-like SAM-binding methyltransferase superfamily. rRNA adenine N(6)-methyltransferase family. RsmA subfamily.

Its subcellular location is the cytoplasm. It catalyses the reaction adenosine(1518)/adenosine(1519) in 16S rRNA + 4 S-adenosyl-L-methionine = N(6)-dimethyladenosine(1518)/N(6)-dimethyladenosine(1519) in 16S rRNA + 4 S-adenosyl-L-homocysteine + 4 H(+). Its function is as follows. Specifically dimethylates two adjacent adenosines (A1518 and A1519) in the loop of a conserved hairpin near the 3'-end of 16S rRNA in the 30S particle. May play a critical role in biogenesis of 30S subunits. This Streptococcus pneumoniae (strain P1031) protein is Ribosomal RNA small subunit methyltransferase A.